Reading from the N-terminus, the 353-residue chain is MIEQFQQVLASVKSVDMSLTKEVQAHLDDLTKPRGSLGRLEEIAMKYVLATGSLRPELRKKKVFCFAADHGVAVEGVSAFPAEVTPQMVYNMLAGGAAINVLSRHAGADLDVVDMGVHHDFVEHPSLRICKVRHGSSNMAEGPAMTMDETLQAIMTGVSLAHEARKEGYDLLATGEMGIANTTPATALYASMLDLPVEMITGRGTGIDDAVLQHKISVIKRALDVNSASLSTPLEQLAALGGFEIAGICGLILGAASVGMPVVVDGFISSAGAVAALKLSCRVSDYLFFSHLSNEQGHKAIMNRLGARPILDLDLRLGEGTGAALAMQVVEASVKLYNEMATFSSASVSGKSV.

The Proton acceptor role is filled by Glu-319.

It belongs to the CobT family.

It carries out the reaction 5,6-dimethylbenzimidazole + nicotinate beta-D-ribonucleotide = alpha-ribazole 5'-phosphate + nicotinate + H(+). Its pathway is nucleoside biosynthesis; alpha-ribazole biosynthesis; alpha-ribazole from 5,6-dimethylbenzimidazole: step 1/2. In terms of biological role, catalyzes the synthesis of alpha-ribazole-5'-phosphate from nicotinate mononucleotide (NAMN) and 5,6-dimethylbenzimidazole (DMB). This is Nicotinate-nucleotide--dimethylbenzimidazole phosphoribosyltransferase from Prosthecochloris aestuarii (strain DSM 271 / SK 413).